The chain runs to 141 residues: Molybdopterin synthase catalytic subunit 2 (141 aa).

Residues 37-39, 103-104, Lys119, and 126-128 contribute to the substrate site; these read MIR, HR, and KHQ.

This sequence belongs to the MoaE family. As to quaternary structure, heterotetramer of 2 MoaD subunits and 2 MoaE subunits. Also stable as homodimer. The enzyme changes between these two forms during catalysis.

The enzyme catalyses 2 [molybdopterin-synthase sulfur-carrier protein]-C-terminal-Gly-aminoethanethioate + cyclic pyranopterin phosphate + H2O = molybdopterin + 2 [molybdopterin-synthase sulfur-carrier protein]-C-terminal Gly-Gly + 2 H(+). It functions in the pathway cofactor biosynthesis; molybdopterin biosynthesis. In terms of biological role, converts molybdopterin precursor Z into molybdopterin. This requires the incorporation of two sulfur atoms into precursor Z to generate a dithiolene group. The sulfur is provided by MoaD. In Mycobacterium tuberculosis (strain CDC 1551 / Oshkosh), this protein is Molybdopterin synthase catalytic subunit 2 (moaE2).